Here is a 93-residue protein sequence, read N- to C-terminus: Large ribosomal subunit protein uL23cz/uL23cy (93 aa).

This sequence belongs to the universal ribosomal protein uL23 family. As to quaternary structure, part of the 50S ribosomal subunit.

The protein resides in the plastid. Its subcellular location is the chloroplast. Its function is as follows. Binds to 23S rRNA. This chain is Large ribosomal subunit protein uL23cz/uL23cy (rpl23-A), found in Panax ginseng (Korean ginseng).